The chain runs to 95 residues: Integration host factor subunit beta (95 aa).

Residues 57–76 (APRTGRNPKTGDKVDLEGKY) are disordered. Residues 65 to 76 (KTGDKVDLEGKY) show a composition bias toward basic and acidic residues.

The protein belongs to the bacterial histone-like protein family. As to quaternary structure, heterodimer of an alpha and a beta chain.

Its function is as follows. This protein is one of the two subunits of integration host factor, a specific DNA-binding protein that functions in genetic recombination as well as in transcriptional and translational control. This chain is Integration host factor subunit beta, found in Enterobacter sp. (strain 638).